A 43-amino-acid chain; its full sequence is Photosystem II reaction center protein Y (43 aa).

A helical transmembrane segment spans residues 8–26 (LFLVVAPILAAVSWAAFNI).

Belongs to the PsbY family. As to quaternary structure, PSII is composed of 1 copy each of membrane proteins PsbA, PsbB, PsbC, PsbD, PsbE, PsbF, PsbH, PsbI, PsbJ, PsbK, PsbL, PsbM, PsbT, PsbX, PsbY, PsbZ, Psb30/Ycf12, peripheral proteins PsbO, CyanoQ (PsbQ), PsbU, PsbV and a large number of cofactors. It forms dimeric complexes.

The protein resides in the cellular thylakoid membrane. Functionally, loosely associated component of the core of photosystem II (PSII), it is not always seen in crystals. PSII is a light-driven water plastoquinone oxidoreductase, using light energy to abstract electrons from H(2)O, generating a proton gradient subsequently used for ATP formation. This chain is Photosystem II reaction center protein Y, found in Parasynechococcus marenigrum (strain WH8102).